A 630-amino-acid chain; its full sequence is 1,4-alpha-glucan branching enzyme GlgB (630 aa).

Aspartate 308 functions as the Nucleophile in the catalytic mechanism. Glutamate 361 (proton donor) is an active-site residue.

This sequence belongs to the glycosyl hydrolase 13 family. GlgB subfamily. As to quaternary structure, monomer.

The catalysed reaction is Transfers a segment of a (1-&gt;4)-alpha-D-glucan chain to a primary hydroxy group in a similar glucan chain.. It participates in glycan biosynthesis; glycogen biosynthesis. Its function is as follows. Catalyzes the formation of the alpha-1,6-glucosidic linkages in glycogen by scission of a 1,4-alpha-linked oligosaccharide from growing alpha-1,4-glucan chains and the subsequent attachment of the oligosaccharide to the alpha-1,6 position. The protein is 1,4-alpha-glucan branching enzyme GlgB of Halothermothrix orenii (strain H 168 / OCM 544 / DSM 9562).